Here is a 651-residue protein sequence, read N- to C-terminus: A-type voltage-gated potassium channel KCND1 (651 aa).

The Cytoplasmic segment spans residues 1-183 (MAAGVATWLP…RAFENPHTST (183 aa)). Residues 2 to 20 (AAGVATWLPFARAAAVGWL) form an interaction with KCNIP1, KCNIP2, and other family members region. Residues histidine 104, cysteine 131, and cysteine 132 each contribute to the Zn(2+) site. Positions 144–164 (AERLAEDEEAEQAGEGPALPA) are disordered. Residues 184–205 (AALVFYYVTGFFIAVSVIANVV) traverse the membrane as a helical segment. Over 206–230 (ETIPCRGTPRWPSKEQSCGDRFPTA) the chain is Extracellular. Residues 231-252 (FFCMDTACVLIFTGEYLLRLFA) traverse the membrane as a helical segment. The Cytoplasmic portion of the chain corresponds to 253–263 (APSRCRFLRSV). The chain crosses the membrane as a helical span at residues 264-284 (MSLIDVVAILPYYIGLFVPKN). Residues 285–287 (DDV) are Extracellular-facing. Residues 288 to 308 (SGAFVTLRVFRVFRIFKFSRH) traverse the membrane as a helical; Voltage-sensor segment. Topologically, residues 309 to 323 (SQGLRILGYTLKSCA) are cytoplasmic. The interval 310–323 (QGLRILGYTLKSCA) is S4-S5 linker. Residues 324 to 345 (SELGFLLFSLTMAIIIFATVMF) form a helical membrane-spanning segment. The Extracellular segment spans residues 346–359 (YAEKGTSKTNFTSI). An N-linked (GlcNAc...) asparagine glycan is attached at asparagine 355. An intramembrane region (helical) is located at residues 360-371 (PAAFWYTIVTMT). Residues 372–377 (TLGYGD) carry the Selectivity filter motif. An intramembrane segment occupies 372–379 (TLGYGDMV). The Extracellular portion of the chain corresponds to 380–386 (PSTIAGK). Residues 387 to 415 (IFGSICSLSGVLVIALPVPVIVSNFSRIY) traverse the membrane as a helical segment. Topologically, residues 416 to 651 (HQNQRADKRR…LPETVKISSL (236 aa)) are cytoplasmic. Serine 458 is subject to Phosphoserine. The segment at 474–489 (FEQQHHHLLHCLEKTT) is required for dendritic targeting. The residue at position 555 (serine 555) is a Phosphoserine. Disordered stretches follow at residues 566 to 585 (RRSP…HDSL) and 601 to 651 (IPTP…ISSL). The segment covering 626–637 (TPNTTLRNSSLG) has biased composition (polar residues).

The protein belongs to the potassium channel family. D (Shal) (TC 1.A.1.2) subfamily. Kv4.1/KCND1 sub-subfamily. Component of heteromultimeric potassium channels. Identified in potassium channel complexes containing KCND1, KCND2, KCND3, KCNIP1, KCNIP2, KCNIP3, KCNIP4, DPP6 and DPP10.

The protein resides in the cell membrane. The catalysed reaction is K(+)(in) = K(+)(out). A-type voltage-gated potassium channel that mediates transmembrane potassium transport in excitable membranes in the brain. Mediates A-type current I(SA) in suprachiasmatic nucleus (SCN) neurons. Exhibits a low-threshold A-type current with a hyperpolarized steady-state inactivation midpoint and the recovery process was steeply voltage-dependent, with recovery being markedly faster at more negative potentials. May regulates repetitive firing rates in the suprachiasmatic nucleus (SCN) neurons and circadian rhythms in neuronal excitability and behavior. Contributes to the regulation of the circadian rhythm of action potential firing in suprachiasmatic nucleus neurons, which regulates the circadian rhythm of locomotor activity. The regulatory subunit KCNIP1 modulates the kinetics of channel inactivation, increases the current amplitudes and accelerates recovery from inactivation, shifts activation in a depolarizing direction. The regulatory subunit DPP10 decreases the voltage sensitivity of the inactivation channel gating. The chain is A-type voltage-gated potassium channel KCND1 from Mus musculus (Mouse).